Consider the following 318-residue polypeptide: Cell surface sensor SHO1 (318 aa).

The disordered stretch occupies residues 1–23 (MPSYGSLHSPSLRKMEHSRGQYG). Over 1 to 38 (MPSYGSLHSPSLRKMEHSRGQYGGGRKGMSLGNVIGDP) the chain is Cytoplasmic. The chain crosses the membrane as a helical span at residues 39-59 (FALATISIAGLAWLIAFIASI). The Extracellular portion of the chain corresponds to 60 to 71 (VAQIQTTQGFPT). The chain crosses the membrane as a helical span at residues 72 to 92 (YTWWTVVFYFFLIPGVFVVVA). Topologically, residues 93 to 100 (SDTIQTYH) are cytoplasmic. The helical transmembrane segment at 101–121 (VALVGYMACGLVLTTSSVNGL) threads the bilayer. Over 122–130 (VYSTNGAKE) the chain is Extracellular. Residues 131-151 (AAAAGFILLSMVTIVWIFYFG) form a helical membrane-spanning segment. At 152–318 (SAPSAMPRAY…IAPSNYLILL (167 aa)) the chain is on the cytoplasmic side. Residues 172–255 (TSNNRQTMTG…AGGAADAEIV (84 aa)) form a disordered region. A compositionally biased stretch (polar residues) spans 190 to 214 (ETSTSVQPPQMYTSAQLNGFENPSP). Positions 237-250 (GLPKTTTPPAGGAA) are enriched in low complexity. Residues 259–318 (EYPYRAKAIYTYEANPDDANEISFSKHEILEVSDVSGRWWQARKETGETGIAPSNYLILL) form the SH3 domain.

Belongs to the SHO1 family. In terms of assembly, forms homooligomers.

Its subcellular location is the cell membrane. MSB2 and SHO1 have overlapping functions in recognizing various surface signals for MAPK PMK1 activation and appressorium formation. While MSB2 is critical for sensing surface hydrophobicity and cutin monomers, SHO1 may play a more important role in recognizing rice leaf waxes. This chain is Cell surface sensor SHO1, found in Pyricularia oryzae (strain 70-15 / ATCC MYA-4617 / FGSC 8958) (Rice blast fungus).